Here is a 189-residue protein sequence, read N- to C-terminus: Protein GrpE (189 aa).

Positions 1–20 (MSDQQHSAPQNAAATASPSD) are enriched in polar residues. A disordered region spans residues 1–29 (MSDQQHSAPQNAAATASPSDSPEAVEATM).

The protein belongs to the GrpE family. In terms of assembly, homodimer.

The protein resides in the cytoplasm. Its function is as follows. Participates actively in the response to hyperosmotic and heat shock by preventing the aggregation of stress-denatured proteins, in association with DnaK and GrpE. It is the nucleotide exchange factor for DnaK and may function as a thermosensor. Unfolded proteins bind initially to DnaJ; upon interaction with the DnaJ-bound protein, DnaK hydrolyzes its bound ATP, resulting in the formation of a stable complex. GrpE releases ADP from DnaK; ATP binding to DnaK triggers the release of the substrate protein, thus completing the reaction cycle. Several rounds of ATP-dependent interactions between DnaJ, DnaK and GrpE are required for fully efficient folding. In Paracidovorax citrulli (strain AAC00-1) (Acidovorax citrulli), this protein is Protein GrpE.